Here is a 409-residue protein sequence, read N- to C-terminus: Putative competence-damage inducible protein (409 aa).

Belongs to the CinA family.

In Clostridium botulinum (strain 657 / Type Ba4), this protein is Putative competence-damage inducible protein.